The sequence spans 727 residues: 1,4-alpha-glucan branching enzyme GlgB (727 aa).

D405 acts as the Nucleophile in catalysis. E458 serves as the catalytic Proton donor.

Belongs to the glycosyl hydrolase 13 family. GlgB subfamily. Monomer.

The catalysed reaction is Transfers a segment of a (1-&gt;4)-alpha-D-glucan chain to a primary hydroxy group in a similar glucan chain.. It functions in the pathway glycan biosynthesis; glycogen biosynthesis. Catalyzes the formation of the alpha-1,6-glucosidic linkages in glycogen by scission of a 1,4-alpha-linked oligosaccharide from growing alpha-1,4-glucan chains and the subsequent attachment of the oligosaccharide to the alpha-1,6 position. This is 1,4-alpha-glucan branching enzyme GlgB from Yersinia pseudotuberculosis serotype O:1b (strain IP 31758).